Here is a 183-residue protein sequence, read N- to C-terminus: Adenine phosphoribosyltransferase (183 aa).

Belongs to the purine/pyrimidine phosphoribosyltransferase family. As to quaternary structure, homodimer.

It is found in the cytoplasm. The catalysed reaction is AMP + diphosphate = 5-phospho-alpha-D-ribose 1-diphosphate + adenine. It functions in the pathway purine metabolism; AMP biosynthesis via salvage pathway; AMP from adenine: step 1/1. Catalyzes a salvage reaction resulting in the formation of AMP, that is energically less costly than de novo synthesis. This is Adenine phosphoribosyltransferase from Salmonella heidelberg (strain SL476).